Reading from the N-terminus, the 242-residue chain is MLTALVIDDEPFAREELTDLLSETGDIDVIGDAANAIVGLKKINELKPDVVFLDIQMPQVTGIELLGMMDPDTMPYVVFVTAYDQYAIQAFEDNAFDYLLKPVDPERLRKTVKRLSKAASHSALSQHIASLAPETLDQIPCIGHNRIVIMATESVECAYSDISGVHVRSASQTASTQLTLKVLEEKTSLVRCHRQYLISIKAISEIKLLENGLAEIITKTGFEVPVSRRYLKLLKEMLGLSH.

Residues 3 to 116 (TALVIDDEPF…RLRKTVKRLS (114 aa)) form the Response regulatory domain. Asp54 is modified (4-aspartylphosphate). Residues 139 to 240 (IPCIGHNRIV…LKLLKEMLGL (102 aa)) enclose the HTH LytTR-type domain.

This is an uncharacterized protein from Vibrio vulnificus (strain CMCP6).